Here is a 524-residue protein sequence, read N- to C-terminus: uncharacterized protein (524 aa).

Positions 83 to 101 (NSTPSKQAKPLQRNSPYQG) are enriched in polar residues. Disordered regions lie at residues 83-108 (NSTPSKQAKPLQRNSPYQGNSQSENQ) and 155-179 (PPCNIETNEDDSGNNEYNNNKKRPR).

Its subcellular location is the cytoplasm. This is an uncharacterized protein from Saccharomyces cerevisiae (strain ATCC 204508 / S288c) (Baker's yeast).